The sequence spans 224 residues: Ribose-5-phosphate isomerase A (224 aa).

Substrate contacts are provided by residues 34 to 37, 87 to 90, and 100 to 103; these read TGST, DGAD, and KGGG. Glu109 serves as the catalytic Proton acceptor. Lys127 is a binding site for substrate.

Belongs to the ribose 5-phosphate isomerase family. Homodimer.

The enzyme catalyses aldehydo-D-ribose 5-phosphate = D-ribulose 5-phosphate. The protein operates within carbohydrate degradation; pentose phosphate pathway; D-ribose 5-phosphate from D-ribulose 5-phosphate (non-oxidative stage): step 1/1. In terms of biological role, catalyzes the reversible conversion of ribose-5-phosphate to ribulose 5-phosphate. The chain is Ribose-5-phosphate isomerase A from Francisella tularensis subsp. novicida (strain U112).